Reading from the N-terminus, the 119-residue chain is Large ribosomal subunit protein P3 (119 aa).

The tract at residues 81 to 119 (GAAAGAASGGAAAEAPKAEEKKEEEKEESEDDLGFSLFD) is disordered. Residues 84-95 (AGAASGGAAAEA) are compositionally biased toward low complexity.

The protein belongs to the eukaryotic ribosomal protein P1/P2 family. Phosphorylated.

Its function is as follows. Plays an important role in the elongation step of protein synthesis. The chain is Large ribosomal subunit protein P3 from Oryza sativa subsp. japonica (Rice).